Here is a 471-residue protein sequence, read N- to C-terminus: ATP synthase subunit beta (471 aa).

ATP is bound at residue 153-160; that stretch reads GGAGVGKT.

The protein belongs to the ATPase alpha/beta chains family. As to quaternary structure, F-type ATPases have 2 components, CF(1) - the catalytic core - and CF(0) - the membrane proton channel. CF(1) has five subunits: alpha(3), beta(3), gamma(1), delta(1), epsilon(1). CF(0) has four main subunits: a(1), b(1), b'(1) and c(9-12).

It is found in the cell membrane. The catalysed reaction is ATP + H2O + 4 H(+)(in) = ADP + phosphate + 5 H(+)(out). In terms of biological role, produces ATP from ADP in the presence of a proton gradient across the membrane. The catalytic sites are hosted primarily by the beta subunits. The sequence is that of ATP synthase subunit beta from Roseiflexus castenholzii (strain DSM 13941 / HLO8).